The following is a 247-amino-acid chain: Probable 2-phosphosulfolactate phosphatase (247 aa).

It belongs to the ComB family. Requires Mg(2+) as cofactor.

It carries out the reaction (2R)-O-phospho-3-sulfolactate + H2O = (2R)-3-sulfolactate + phosphate. This chain is Probable 2-phosphosulfolactate phosphatase, found in Clostridium perfringens (strain 13 / Type A).